A 201-amino-acid polypeptide reads, in one-letter code: Ras-related protein Rab-1B (201 aa).

N-acetylmethionine is present on Met-1. Residues Ser-17, Gly-18, Val-19, Gly-20, Lys-21, Ser-22, Cys-23, Tyr-33, Thr-34, Glu-35, Ser-36, Ser-39, and Thr-40 each contribute to the GTP site. Ser-22 contributes to the Mg(2+) binding site. A Switch 1 motif is present at residues 30–45 (DDTYTESYISTIGVDF). Positions 40 and 63 each coordinate Mg(2+). The segment at 64–83 (TAGQERGRTITSSYYRGAHG) is switch 2 region; required for interaction with REP1/CHM. Residues 65–80 (AGQERGRTITSSYYRG) carry the Switch 2 motif. Residues Gly-66, Asn-121, Lys-122, Asp-124, Ser-151, Ala-152, and Lys-153 each contribute to the GTP site. The interval 173–201 (MGPGAASGGERPNLKIDSTPVKQAGGGCC) is disordered. Residues Cys-200 and Cys-201 are each lipidated (S-geranylgeranyl cysteine). Cys-201 carries the cysteine methyl ester modification.

It belongs to the small GTPase superfamily. Rab family. Interacts with MICAL1 and MICAL2. Interacts (in GTP-bound form) with MICALCL, MICAL1 and MILCAL3. Interacts with GDI1; the interaction requires the GDP-bound state. Interacts with CHM/REP1; the interaction requires the GDP-bound form and is necessary for prenylation by GGTase II. Interacts with RabGAP TBC1D20. Interacts (in GDP-bound form) with lipid phosphatase MTMR6 (via GRAM domain); the interaction regulates MTMR6 recruitment to the endoplasmic reticulum-Golgi intermediate compartment. Interacts (in GDP-bound form) with lipid phosphatase MTMR7. Mg(2+) is required as a cofactor. In terms of processing, prenylated; by GGTase II, only after interaction of the substrate with Rab escort protein 1 (REP1).

The protein resides in the cytoplasm. Its subcellular location is the membrane. It is found in the preautophagosomal structure membrane. The protein localises to the perinuclear region. It carries out the reaction GTP + H2O = GDP + phosphate + H(+). With respect to regulation, regulated by guanine nucleotide exchange factors (GEFs) which promote the exchange of bound GDP for free GTP. Regulated by GTPase activating proteins (GAPs) including TBC1D20 which increases the GTP hydrolysis activity. Inhibited by GDP dissociation inhibitors (GDIs). In terms of biological role, the small GTPases Rab are key regulators of intracellular membrane trafficking, from the formation of transport vesicles to their fusion with membranes. Rabs cycle between an inactive GDP-bound form and an active GTP-bound form that is able to recruit to membranes different set of downstream effectors directly responsible for vesicle formation, movement, tethering and fusion. Plays a role in the initial events of the autophagic vacuole development which take place at specialized regions of the endoplasmic reticulum. Regulates vesicular transport between the endoplasmic reticulum and successive Golgi compartments. Required to modulate the compacted morphology of the Golgi. Promotes the recruitment of lipid phosphatase MTMR6 to the endoplasmic reticulum-Golgi intermediate compartment. The polypeptide is Ras-related protein Rab-1B (RAB1B) (Sus scrofa (Pig)).